The chain runs to 198 residues: Large ribosomal subunit protein uL24c (198 aa).

The N-terminal 50 residues, 1–50 (MATMSALQSSFTSLSLSPSSSFLGQRLISPISLSVTSPVKPAENPCLVLA), are a transit peptide targeting the chloroplast.

Belongs to the universal ribosomal protein uL24 family. In terms of assembly, part of the 50S ribosomal subunit.

It localises to the plastid. Its subcellular location is the chloroplast. In terms of biological role, one of two assembly initiator proteins, it binds directly to the 5'-end of the 23S rRNA, where it nucleates assembly of the 50S subunit. Required for optimal plastid performance in terms of photosynthesis and growth. Required for the translation of plastid mRNAs. Plays a critical role in biosynthesis of thylakoid membrane proteins encoded by chloroplast genes. This chain is Large ribosomal subunit protein uL24c (RPL24), found in Arabidopsis thaliana (Mouse-ear cress).